Here is a 189-residue protein sequence, read N- to C-terminus: Peptidyl-tRNA hydrolase (189 aa).

Residue Tyr-15 participates in tRNA binding. The Proton acceptor role is filled by His-20. Residues Phe-64 and Asn-66 each contribute to the tRNA site.

This sequence belongs to the PTH family. As to quaternary structure, monomer.

The protein localises to the cytoplasm. It catalyses the reaction an N-acyl-L-alpha-aminoacyl-tRNA + H2O = an N-acyl-L-amino acid + a tRNA + H(+). Its function is as follows. Hydrolyzes ribosome-free peptidyl-tRNAs (with 1 or more amino acids incorporated), which drop off the ribosome during protein synthesis, or as a result of ribosome stalling. In terms of biological role, catalyzes the release of premature peptidyl moieties from peptidyl-tRNA molecules trapped in stalled 50S ribosomal subunits, and thus maintains levels of free tRNAs and 50S ribosomes. This Persephonella marina (strain DSM 14350 / EX-H1) protein is Peptidyl-tRNA hydrolase.